The sequence spans 88 residues: Small cysteine-rich outer membrane protein OmcA (88 aa).

The first 18 residues, 1–18 (MKKTALLAALCSVVSLSS), serve as a signal peptide directing secretion. The N-palmitoyl cysteine moiety is linked to residue cysteine 19. Residue cysteine 19 is the site of S-diacylglycerol cysteine attachment. Positions 67–88 (THQDAEHGPQAREIPVDGKCRQ) are disordered.

Part of a disulfide cross-linked outer membrane complex (COMC) composed of the major outer membrane porin (MOMP), the small cysteine-rich protein (OmcA) and the large cysteine-rich periplasmic protein (OmcB).

The protein localises to the cell outer membrane. In elementary bodies (EBs, the infectious stage, which is able to survive outside the host cell) provides the structural integrity of the outer envelope through disulfide cross-links with the large cysteine-rich periplasmic protein and the major outer membrane porin. It has been described in publications as the Sarkosyl-insoluble COMC (Chlamydia outer membrane complex), and serves as the functional equivalent of peptidoglycan. The chain is Small cysteine-rich outer membrane protein OmcA (omcA) from Chlamydia trachomatis serovar L2 (strain ATCC VR-902B / DSM 19102 / 434/Bu).